The following is a 1059-amino-acid chain: MGTAQVLPGILQKHCCILPDRNTESQCTLCGEPEEEEGGDLAQPGLSFPGPAEEDIDQQYSWSPTQHFSEERYSPAPRNMKGLTGSRNQPQLCVGHTCGLSPTDECEHPHDHVRHGPDVRQPYLLSPAESCPMDHHRCSPRSSVHSECMMMPVMLGDHVSSSTFPRMHYSSHYDTRDDCATSHASTKVNRIPANLLDQFEKQLPLHRDGFHTLQYHRASAATEQRNESPGRIRHLVHSVQKLFTKSHSLEGSSKSNINGTKSEGRMDDHHQSHLSKHSKRSKSKERKPESKHKSGMSSWWSSDDNLDSDSTYRTPSVAHRHHMDHIPHCYPEALQSPFGDLSLKTSKSNSDVKCSACEGLALTPDTRYMKRSSWSTLTVSQAKEAYRKSSLNLDKPLVHPEIKPSLQPCHYLQVPQDDWGAYPTGGKEEEIPCRRMRSGSYIKAMGDEESGESDSSPKTSPTVALRPEPLLKSIIQRPLGDHQTQSYLQAATEVPVGHSLDPSVNYNSPKFRSRNQSYMRAVSTLSQASCVSQMSEAEVNGQFESVCESVFSEVESQAMDALDLPGCFRTRSHSYLRAIQAGYSQDDECIPVMTPSNMTSTIRSTAAVSYTNYKKTPPPVPPRTTSKPLISVTAQSSTESTQDAYQDSRAQRMSPWPQDSRGGLYNSMDSLDSNKAMNLALESAAAQRHAADTQSSSTRSIDKAVLVSKAEELLKSRCSSIGVQDSEFPDHQPYPRSDVETATDSDTESRGLREYHSVGVQVEDEKRHGRFKRSNSVTAAVQADLELEGFPGHVSMEDKGLQFGSSFQRHSEPSTPTQYGALRTVRTQGLFSYREDYRTQVDTSTLPPPDPWLEPSLDTVETGRMSPCRRDGSWFLKLLHTETKKMEGWCKEMEREAEENDLSEEILGKIRSAVGSAQLLMSQKFQQFYWLCQQNMDPSAMPRPTSQDLAGYWDMLQLSVEDVSMKFDELHQLKLNDWKIMESPERKEERKIPPPIPKKPPKGKFPITREKSLDLPDRQRQEARRRLMAAKRAASFRQNSATERADSIEIYIPEAQTRL.

Disordered stretches follow at residues 31–56 (GEPEEEEGGDLAQPGLSFPGPAEEDI) and 244–311 (TKSH…SDST). Residues 244–261 (TKSHSLEGSSKSNINGTK) show a composition bias toward polar residues. The segment covering 262–271 (SEGRMDDHHQ) has biased composition (basic and acidic residues). Residues 272–285 (SHLSKHSKRSKSKE) are compositionally biased toward basic residues. 4 positions are modified to phosphoserine: S302, S308, S390, and S456. Disordered stretches follow at residues 446–466 (GDEESGESDSSPKTSPTVALR) and 632–669 (VTAQSSTESTQDAYQDSRAQRMSPWPQDSRGGLYNSMD). Residues 632 to 645 (VTAQSSTESTQDAY) are compositionally biased toward polar residues. Phosphoserine occurs at positions 667, 670, 673, and 720. The disordered stretch occupies residues 723-756 (VQDSEFPDHQPYPRSDVETATDSDTESRGLREYH). At T743 the chain carries Phosphothreonine. S745 carries the post-translational modification Phosphoserine. Over residues 747-756 (TESRGLREYH) the composition is skewed to basic and acidic residues. Residues S776, S811, S983, and S1012 each carry the phosphoserine modification. The interval 985–1024 (ERKEERKIPPPIPKKPPKGKFPITREKSLDLPDRQRQEAR) is disordered. The segment covering 1007–1024 (ITREKSLDLPDRQRQEAR) has biased composition (basic and acidic residues).

This sequence belongs to the SAPAP family. In terms of assembly, interacts with DLG4/PSD-95. As to expression, expressed in various brain areas.

The protein resides in the cell membrane. It is found in the postsynaptic density. Its subcellular location is the synapse. In terms of biological role, may play a role in the molecular organization of synapses and neuronal cell signaling. Could be an adapter protein linking ion channel to the subsynaptic cytoskeleton. May induce enrichment of PSD-95/SAP90 at the plasma membrane. The polypeptide is Disks large-associated protein 2 (Rattus norvegicus (Rat)).